The chain runs to 634 residues: MGLVTVGELKPAFTGKRGFRLNSTIRHASEWPISDVSSDLTVQVGSSSFCLHKFPLVSRSGKIRKLLADPKISNVCLSNAPGGSEAFELAAKFCYGINIEINLLNIAKLRCASHYLEMTEDFSEENLASKTEHFLKETIFPSILNSIIVLHHCETLIPVSEDLNLVNRLIIAVANNACKEQLTSGLLKLDYSFSGTNIEPQTPLDWWGKSLAVLNLDFFQRVISAVKSKGLIQDVISKILISYTNKSLQGLIVRDPKLEKERVLDSEGKKKQRLIVETIVRLLPTQGRRSSVPMAFLSSLLKMVIATSSSASTGSCRSDLERRIGLQLDQAILEDVLIPINLNGTNNTMYDIDSILRIFSIFLNLDEDDEEEEHHHLQFRDETEMIYDFDSPGSPKQSSILKVSKLMDNYLAEIAMDPNLTTSKFIALAELLPDHARIISDGLYRAVDIYLKVHPNIKDSERYRLCKTIDSQKLSQEACSHAAQNERLPVQMAVQVLYFEQIRLRNAMSSSIGPTQFLFNSNCHQFPQRSGSGAGSGAISPRDNYASVRRENRELKLEVARMRMRLTDLEKDHISIKQELVKSNPGTKLFKSFAKKISKLNSLFSFSSLKPSLSGKASSESRFLFQRKRRHSVS.

One can recognise a BTB domain in the interval 38 to 103 (SDLTVQVGSS…CYGINIEINL (66 aa)). Residues 205–503 (DWWGKSLAVL…VQVLYFEQIR (299 aa)) form the NPH3 domain. Phosphotyrosine is present on Tyr444. A coiled-coil region spans residues 542–580 (RDNYASVRRENRELKLEVARMRMRLTDLEKDHISIKQEL).

It belongs to the NPH3 family.

The protein operates within protein modification; protein ubiquitination. Functionally, may act as a substrate-specific adapter of an E3 ubiquitin-protein ligase complex (CUL3-RBX1-BTB) which mediates the ubiquitination and subsequent proteasomal degradation of target proteins. The sequence is that of BTB/POZ domain-containing protein At1g03010 from Arabidopsis thaliana (Mouse-ear cress).